Here is a 420-residue protein sequence, read N- to C-terminus: Putative zinc metalloprotease Lmo1318 (420 aa).

His18 contributes to the Zn(2+) binding site. Glu19 is a catalytic residue. Residue His22 participates in Zn(2+) binding. 4 consecutive transmembrane segments (helical) span residues 172–194 (TIFAGPLFNFILAILIFTALAFV), 304–326 (NWIVQIFTILGNMFTGGFSLDML), 347–369 (VLNWTAVLSINLGIVNLLPLPAL), and 393–412 (GIIHFAGFALLMVLMILVTW). Positions 176 to 267 (GPLFNFILAI…DGKTQDIDVK (92 aa)) constitute a PDZ domain.

This sequence belongs to the peptidase M50B family. Zn(2+) is required as a cofactor.

The protein localises to the cell membrane. The protein is Putative zinc metalloprotease Lmo1318 of Listeria monocytogenes serovar 1/2a (strain ATCC BAA-679 / EGD-e).